A 657-amino-acid polypeptide reads, in one-letter code: Probable potassium transport system protein Kup (657 aa).

The disordered stretch occupies residues 1-25 (MGSGPADEEHTVDTEPGVSPPRRTV). Transmembrane regions (helical) follow at residues 35-55 (VVVGALGVVFGDIGTSPIYTI), 77-97 (VVSLIFWSVMLIVTATYVLLV), 127-147 (TAVLAGLGIFGAALFFGDSMI), 165-185 (PGLEEWIVPITAVIIVALFSV), 196-216 (LFGPVMIVWFVSIGACGVSGI), 234-254 (FFFGHFGIAFFALAAVVLAVT), 275-295 (WLVLVLPACVLSYLGQGALLL), 315-335 (WPMVLLATAATVIASQAVITG), 365-385 (IYVPWINWVLMVSVLTLVFAF), 394-414 (AFGMAVTGTITITTLLFFYIV), 422-442 (LWLVVCGAGCLLAVDLLFLAA), and 447-467 (LVHGAWLPLLIALTAFTVMTT).

It belongs to the HAK/KUP transporter (TC 2.A.72) family.

Its subcellular location is the cell membrane. The enzyme catalyses K(+)(in) + H(+)(in) = K(+)(out) + H(+)(out). Functionally, transport of potassium into the cell. Likely operates as a K(+):H(+) symporter. In Rhodococcus jostii (strain RHA1), this protein is Probable potassium transport system protein Kup.